The sequence spans 610 residues: Glutamine--fructose-6-phosphate aminotransferase [isomerizing] (610 aa).

Cys-2 acts as the Nucleophile; for GATase activity in catalysis. In terms of domain architecture, Glutamine amidotransferase type-2 spans 2–218; that stretch reads CGIVGAVAQR…EGDIAEITRR (217 aa). 2 consecutive SIS domains span residues 278 to 426 and 459 to 600; these read IVDS…VKGH and LAED…VDQP. The active-site For Fru-6P isomerization activity is Lys-605.

Homodimer.

It is found in the cytoplasm. The enzyme catalyses D-fructose 6-phosphate + L-glutamine = D-glucosamine 6-phosphate + L-glutamate. Its function is as follows. Catalyzes the first step in hexosamine metabolism, converting fructose-6P into glucosamine-6P using glutamine as a nitrogen source. This is Glutamine--fructose-6-phosphate aminotransferase [isomerizing] from Haemophilus influenzae (strain ATCC 51907 / DSM 11121 / KW20 / Rd).